Reading from the N-terminus, the 266-residue chain is Hydroxypyruvate/pyruvate aldolase (266 aa).

Histidine 48 functions as the Proton acceptor in the catalytic mechanism. A divalent metal cation-binding residues include glutamate 152 and aspartate 178.

Belongs to the HpcH/HpaI aldolase family. Requires a divalent metal cation as cofactor.

The catalysed reaction is D-glyceraldehyde + pyruvate = 2-dehydro-3-deoxy-L-galactonate. It catalyses the reaction 2-dehydro-3-deoxy-D-gluconate = D-glyceraldehyde + pyruvate. Aldolase which can catalyze in vitro the aldolisation reaction between hydroxypyruvate (HPA) or pyruvate (PA) and D-glyceraldehyde (D-GA). The condensation of pyruvate and D-glyceraldehyde produces 2-dehydro-3-deoxy-L-galactonate as the major product and 2-dehydro-3-deoxy-D-gluconate. Has weak activity with hydroxypyruvate and D-glyceraldehyde. The chain is Hydroxypyruvate/pyruvate aldolase from Agrobacterium fabrum (strain C58 / ATCC 33970) (Agrobacterium tumefaciens (strain C58)).